The following is a 376-amino-acid chain: Queuine tRNA-ribosyltransferase (376 aa).

Catalysis depends on D93, which acts as the Proton acceptor. Substrate contacts are provided by residues D93–F97, D147, Q190, and G217. The segment at G248–D254 is RNA binding. Residue D267 is the Nucleophile of the active site. Residues T272 to R276 are RNA binding; important for wobble base 34 recognition.

Belongs to the queuine tRNA-ribosyltransferase family. As to quaternary structure, homodimer. Within each dimer, one monomer is responsible for RNA recognition and catalysis, while the other monomer binds to the replacement base PreQ1.

It carries out the reaction 7-aminomethyl-7-carbaguanine + guanosine(34) in tRNA = 7-aminomethyl-7-carbaguanosine(34) in tRNA + guanine. It participates in tRNA modification; tRNA-queuosine biosynthesis. Functionally, catalyzes the base-exchange of a guanine (G) residue with the queuine precursor 7-aminomethyl-7-deazaguanine (PreQ1) at position 34 (anticodon wobble position) in tRNAs with GU(N) anticodons (tRNA-Asp, -Asn, -His and -Tyr). Catalysis occurs through a double-displacement mechanism. The nucleophile active site attacks the C1' of nucleotide 34 to detach the guanine base from the RNA, forming a covalent enzyme-RNA intermediate. The proton acceptor active site deprotonates the incoming PreQ1, allowing a nucleophilic attack on the C1' of the ribose to form the product. After dissociation, two additional enzymatic reactions on the tRNA convert PreQ1 to queuine (Q), resulting in the hypermodified nucleoside queuosine (7-(((4,5-cis-dihydroxy-2-cyclopenten-1-yl)amino)methyl)-7-deazaguanosine). The sequence is that of Queuine tRNA-ribosyltransferase from Rhizobium meliloti (strain 1021) (Ensifer meliloti).